The chain runs to 300 residues: Probable low-salt glycan biosynthesis reductase Agl14 (300 aa).

NADH-binding positions include 10-12, 46-47, and 70-72; these read GLL, DI, and AYT. NADPH is bound by residues 11 to 12, 46 to 47, 70 to 72, Tyr-109, Tyr-135, and Lys-139; these read LL, DI, and AYT. NADH-binding residues include Tyr-135 and Lys-139. Tyr-135 acts as the Proton donor/acceptor in catalysis.

The protein belongs to the dTDP-4-dehydrorhamnose reductase family.

It participates in protein modification; protein glycosylation. Its pathway is cell surface structure biogenesis; S-layer biogenesis. Functionally, reductase involved in N-glycan biosynthetic pathway that takes place under low-salt conditions (1.75 M instead of 3.4 M). Participates in the formation of the tetrasaccharide present at 'Asn-532' of S-layer glycoprotein Csg, consisting of a sulfated hexose, 2 hexoses and rhamnose. Involved in the addition of final rhamnose (sugar 4) of the tetrasaccharide on the dolichol phosphate carrier. The sequence is that of Probable low-salt glycan biosynthesis reductase Agl14 (agl14) from Haloferax volcanii (strain ATCC 29605 / DSM 3757 / JCM 8879 / NBRC 14742 / NCIMB 2012 / VKM B-1768 / DS2) (Halobacterium volcanii).